The primary structure comprises 210 residues: Cyclin-U1-1 (210 aa).

This sequence belongs to the cyclin family. Cyclin U/P subfamily. In terms of assembly, interacts with CDKA-1. In terms of tissue distribution, expressed in roots and flowers. Expressed in the shoot apex, leaf primordia and young leaves.

The polypeptide is Cyclin-U1-1 (CYCU1-1) (Arabidopsis thaliana (Mouse-ear cress)).